The following is a 342-amino-acid chain: Protease HtpX homolog (342 aa).

2 helical membrane passes run 6 to 26 (TAML…LIGG) and 28 to 48 (GGMM…YWNS). Histidine 130 contacts Zn(2+). Glutamate 131 is a catalytic residue. Histidine 134 provides a ligand contact to Zn(2+). The next 2 helical transmembrane spans lie at 145 to 165 (ITAT…FFGG) and 173 to 193 (GGGI…AMLV). A Zn(2+)-binding site is contributed by glutamate 202. The disordered stretch occupies residues 290 to 342 (PQHSKPAASGPWGSSAERSTDDPWGVKGGASTRSVPKIGRRGKDNDAPKGPWN).

This sequence belongs to the peptidase M48B family. It depends on Zn(2+) as a cofactor.

It localises to the cell inner membrane. In Allorhizobium ampelinum (strain ATCC BAA-846 / DSM 112012 / S4) (Agrobacterium vitis (strain S4)), this protein is Protease HtpX homolog.